The primary structure comprises 1228 residues: Serine/threonine-protein kinase CST20 (1228 aa).

Positions 1–18 (MSILSENNPTQTSITDPN) are enriched in polar residues. Disordered stretches follow at residues 1 to 382 (MSIL…TAHN) and 405 to 468 (NSTN…HSQE). 2 stretches are compositionally biased toward low complexity: residues 57 to 70 (NTTS…SLGS) and 95 to 123 (ESGS…NPES). Over residues 148-159 (HQGDDSDNEKQY) the composition is skewed to basic and acidic residues. Composition is skewed to polar residues over residues 173 to 195 (DSYS…NNVS), 205 to 222 (TSSL…NENA), and 232 to 244 (PQVS…SFHD). Positions 246–255 (SSVISSSTSV) are enriched in low complexity. Polar residues-rich tracts occupy residues 260–275 (SNPT…SYKS) and 309–328 (DTLS…TLQG). The span at 347–367 (NTSATSRNTSGTSTSTVVKNS) shows a compositional bias: low complexity. Polar residues predominate over residues 368 to 382 (RSGTSKLTSTSTAHN). Residues 437–466 (KVRGVFSSMFGKNKSTSSSSSSNSGSNSHS) show a composition bias toward low complexity. Residues 473–486 (ISTPFNAKHLAHVG) form the CRIB domain. 2 disordered regions span residues 543 to 829 (FHFD…ALAD) and 865 to 917 (LREK…KQAA). The segment covering 548–559 (NKSSSSGWSNEN) has biased composition (polar residues). The span at 568–579 (SNSGSGGGGGGA) shows a compositional bias: gly residues. The segment covering 602–611 (ITPSQSMPTK) has biased composition (polar residues). Over residues 612 to 626 (TESKQSENQHPHEDN) the composition is skewed to basic and acidic residues. The span at 627–640 (ATQYTPRTPTSHVQ) shows a compositional bias: polar residues. Composition is skewed to low complexity over residues 668–681 (PSSQ…SQSD), 693–708 (ISPS…SKSL), and 734–747 (SIPK…SLSS). Positions 748-759 (QLRPATNGSTTA) are enriched in polar residues. Residues 787–805 (APPPPPSASPAPPVPPAPP) show a composition bias toward pro residues. The span at 809–824 (LSEQTSEIPQQRTAPS) shows a compositional bias: polar residues. Positions 865 to 874 (LREKNERQNR) are enriched in basic and acidic residues. Positions 875–890 (QQETGQNNADTASGGS) are enriched in polar residues. The region spanning 951–1203 (YVDLVKIGQG…ADELLHDNFI (253 aa)) is the Protein kinase domain. ATP contacts are provided by residues 957–965 (IGQGASGGV) and lysine 981. Residue aspartate 1071 is the Proton acceptor of the active site.

Belongs to the protein kinase superfamily. STE Ser/Thr protein kinase family. STE20 subfamily.

It is found in the cytoplasm. The protein localises to the nucleus. It catalyses the reaction L-seryl-[protein] + ATP = O-phospho-L-seryl-[protein] + ADP + H(+). The catalysed reaction is L-threonyl-[protein] + ATP = O-phospho-L-threonyl-[protein] + ADP + H(+). Its function is as follows. MAP4K component of the MAPK pathway required for the mating pheromone response, and the regulation of cell polarity and cell cycle. Phosphorylates histone H2B to form H2BS10ph. Required for hyphal formation and virulence. This Candida albicans (strain SC5314 / ATCC MYA-2876) (Yeast) protein is Serine/threonine-protein kinase CST20 (CST20).